Consider the following 289-residue polypeptide: ATP synthase subunit a (289 aa).

The next 6 membrane-spanning stretches (helical) occupy residues 43-63 (AFHLDTLGWSVALGLIFLLIF), 104-124 (IAPLALTIFVWVFLMNAVDLI), 160-180 (FCVFALIIFYSIKVKGLGGFI), 193-213 (IFVQILLIPVNFLLEFVTLIA), 232-252 (VFILIAVMFGSGLLWLSGLGV), and 259-279 (AVFHILIITLQAFIFMMLTIV).

It belongs to the ATPase A chain family. F-type ATPases have 2 components, CF(1) - the catalytic core - and CF(0) - the membrane proton channel. CF(1) has five subunits: alpha(3), beta(3), gamma(1), delta(1), epsilon(1). CF(0) has three main subunits: a(1), b(2) and c(9-12). The alpha and beta chains form an alternating ring which encloses part of the gamma chain. CF(1) is attached to CF(0) by a central stalk formed by the gamma and epsilon chains, while a peripheral stalk is formed by the delta and b chains.

It is found in the cell inner membrane. Functionally, key component of the proton channel; it plays a direct role in the translocation of protons across the membrane. The polypeptide is ATP synthase subunit a (Pseudomonas putida (strain ATCC 47054 / DSM 6125 / CFBP 8728 / NCIMB 11950 / KT2440)).